A 108-amino-acid chain; its full sequence is UPF0102 protein Sbal_4100 (108 aa).

It belongs to the UPF0102 family.

The sequence is that of UPF0102 protein Sbal_4100 from Shewanella baltica (strain OS155 / ATCC BAA-1091).